Reading from the N-terminus, the 340-residue chain is Phosphoribosylformylglycinamidine cyclo-ligase (340 aa).

Belongs to the AIR synthase family.

Its subcellular location is the cytoplasm. It carries out the reaction 2-formamido-N(1)-(5-O-phospho-beta-D-ribosyl)acetamidine + ATP = 5-amino-1-(5-phospho-beta-D-ribosyl)imidazole + ADP + phosphate + H(+). Its pathway is purine metabolism; IMP biosynthesis via de novo pathway; 5-amino-1-(5-phospho-D-ribosyl)imidazole from N(2)-formyl-N(1)-(5-phospho-D-ribosyl)glycinamide: step 2/2. This chain is Phosphoribosylformylglycinamidine cyclo-ligase, found in Streptococcus pneumoniae serotype 2 (strain D39 / NCTC 7466).